Consider the following 195-residue polypeptide: Large ribosomal subunit protein eL18 (195 aa).

A Glycyl lysine isopeptide (Lys-Gly) (interchain with G-Cter in SUMO2) cross-link involves residue Lys126. Ser137 carries the phosphoserine modification. The disordered stretch occupies residues 158-195 (HFGKAPGTPHSHTKPYVRSKGRKFERARGRRASRGYKN). Phosphothreonine is present on Thr165. Basic residues-rich tracts occupy residues 168–178 (SHTKPYVRSKG) and 185–195 (RGRRASRGYKN). Lys171 participates in a covalent cross-link: Glycyl lysine isopeptide (Lys-Gly) (interchain with G-Cter in SUMO2).

It belongs to the eukaryotic ribosomal protein eL18 family. In terms of assembly, component of the large ribosomal subunit.

Its subcellular location is the cytoplasm. The protein resides in the cytosol. It localises to the rough endoplasmic reticulum. Functionally, component of the large ribosomal subunit. This chain is Large ribosomal subunit protein eL18 (RPL18), found in Sus scrofa (Pig).